Reading from the N-terminus, the 170-residue chain is Photosystem II extrinsic protein V (170 aa).

The N-terminal stretch at 1 to 33 (MASFFSTLRRSLNRLLIALPVLLGLMISTPAQA) is a signal peptide. C70, C73, H74, and H125 together coordinate heme c.

This sequence belongs to the cytochrome c family. PsbV subfamily. As to quaternary structure, PSII is composed of 1 copy each of membrane proteins PsbA, PsbB, PsbC, PsbD, PsbE, PsbF, PsbH, PsbI, PsbJ, PsbK, PsbL, PsbM, PsbT, PsbX, PsbY, PsbZ, Psb30/Ycf12, peripheral proteins PsbO, CyanoQ (PsbQ), PsbU, PsbV and a large number of cofactors. It forms dimeric complexes. Heme c serves as cofactor.

Its subcellular location is the cellular thylakoid membrane. In terms of biological role, one of the extrinsic, lumenal subunits of photosystem II (PSII). PSII is a light-driven water plastoquinone oxidoreductase, using light energy to abstract electrons from H(2)O, generating a proton gradient subsequently used for ATP formation. The extrinsic proteins stabilize the structure of photosystem II oxygen-evolving complex (OEC), the ion environment of oxygen evolution and protect the OEC against heat-induced inactivation. Low-potential cytochrome c that plays a role in the OEC of PSII. This is Photosystem II extrinsic protein V from Synechococcus sp. (strain CC9311).